The primary structure comprises 174 residues: Transcriptional repressor NrdR (174 aa).

A zinc finger spans residues 3–34; it reads CPFCQHNDTRVIDSRVSEDGTTIRRRRECEAC. The 91-residue stretch at 49–139 folds into the ATP-cone domain; the sequence is PTVVKSDGGR…VYRSFQDVAD (91 aa).

The protein belongs to the NrdR family. Zn(2+) is required as a cofactor.

Functionally, negatively regulates transcription of bacterial ribonucleotide reductase nrd genes and operons by binding to NrdR-boxes. The chain is Transcriptional repressor NrdR from Xanthomonas axonopodis pv. citri (strain 306).